The following is a 250-amino-acid chain: Endonuclease NucS (250 aa).

The protein belongs to the NucS endonuclease family.

It is found in the cytoplasm. Cleaves both 3' and 5' ssDNA extremities of branched DNA structures. This Sulfolobus acidocaldarius (strain ATCC 33909 / DSM 639 / JCM 8929 / NBRC 15157 / NCIMB 11770) protein is Endonuclease NucS.